The chain runs to 405 residues: MATYTCITCRVAFKDADIQRAHYKTDWHRYNLKRKVADMPPVTAENFQERVLAQRAVAEERDKVTATYCTVCSKRFSTFNAYENHLKSKKHLELEKKAVQAVSKKVKILNEKNLEKGLAVESVDKDEMNAAIQQAIRAQPSSSPKKVPLPPSHASSSPVPMESAGLLQSKERTQKPPRLQWFEQQAKKLAKQEAEEEEDSEEGWEEMDSDEDLGSEEEMEGVEEEEEKQAEAESTCAIGAIPVTDCLFCSHHSRTLMKNVAHMTKVHSFFIPDIEYLVDLRGLIKYLGEKIGVGKICIWCNEKGKSFYSTEAVQAHMNDKSHCKLFTDGDAALEFADFYDFRSSYPDHKEGQDMEVPAELPSDRELEYDDDTMELIPPFRCKSWSSFFNEILQAAVWSVKNGGCY.

U1-type zinc fingers lie at residues 4–28 and 67–91; these read YTCITCRVAFKDADIQRAHYKTDWH and TYCTVCSKRFSTFNAYENHLKSKKH. The tract at residues 135–230 is disordered; the sequence is AIRAQPSSSP…GVEEEEEKQA (96 aa). A compositionally biased stretch (acidic residues) spans 194-228; sequence AEEEEDSEEGWEEMDSDEDLGSEEEMEGVEEEEEK.

It belongs to the REI1 family. In terms of assembly, homo- and heterodimer. Associates with pre-60S ribosomal particles. In terms of tissue distribution, mainly expressed in the ovary. Mainly expressed in the testis.

The protein localises to the cytoplasm. Its subcellular location is the nucleus. Its function is as follows. Pre-60S-associated cytoplasmic factor involved in the cytoplasmic maturation of the 60S subunit. This is Cytoplasmic 60S subunit biogenesis factor ZNF622 (ZNF622) from Gallus gallus (Chicken).